The primary structure comprises 500 residues: NAD(P)H-quinone oxidoreductase chain 4, chloroplastic (500 aa).

14 consecutive transmembrane segments (helical) span residues Phe-4–Phe-24, Ile-37–Leu-57, Gly-84–Ala-104, Ser-111–Phe-129, Leu-134–Met-154, Phe-167–Leu-187, Ala-208–Ile-228, His-242–Val-262, Ala-272–Ala-292, Ile-305–Asp-325, Gly-330–Gly-350, Ile-374–Ala-396, Ile-416–Met-436, and Leu-462–Val-482.

This sequence belongs to the complex I subunit 4 family.

It is found in the plastid. Its subcellular location is the chloroplast thylakoid membrane. It carries out the reaction a plastoquinone + NADH + (n+1) H(+)(in) = a plastoquinol + NAD(+) + n H(+)(out). The catalysed reaction is a plastoquinone + NADPH + (n+1) H(+)(in) = a plastoquinol + NADP(+) + n H(+)(out). The sequence is that of NAD(P)H-quinone oxidoreductase chain 4, chloroplastic from Liriodendron tulipifera (Tuliptree).